The chain runs to 102 residues: Protamine-2 (102 aa).

2 disordered regions span residues 1–40 (MVRY…SPEH) and 67–102 (HRQQ…CRRH). Residues Ser-8, Ser-10, and Ser-37 each carry the phosphoserine modification.

This sequence belongs to the protamine P2 family. In terms of assembly, interacts with TDRP. In terms of processing, proteolytic processing into mature chains is required for histone eviction during spermatogenesis. Transition proteins (TNP1 and TNP2) are required for processing. As to expression, testis.

The protein localises to the nucleus. It is found in the chromosome. Its function is as follows. Protamines substitute for histones in the chromatin of sperm during the haploid phase of spermatogenesis. They compact sperm DNA into a highly condensed, stable and inactive complex. In Pan troglodytes (Chimpanzee), this protein is Protamine-2 (PRM2).